Reading from the N-terminus, the 169-residue chain is Disulfide bond formation protein B (169 aa).

Over 1–14 the chain is Cytoplasmic; it reads MNNLTLSLHRERRL. A helical membrane pass occupies residues 15-31; the sequence is LVLLGLVCLALLAGALY. At 32–49 the chain is on the periplasmic side; the sequence is LQYVKNEDPCPLCIIQRY. A disulfide bridge connects residues Cys41 and Cys44. The chain crosses the membrane as a helical span at residues 50–64; sequence FFVLIAVFAFIGAGM. The Cytoplasmic portion of the chain corresponds to 65 to 71; it reads ASGAGIA. A helical transmembrane segment spans residues 72–89; the sequence is VIEALIVLSAAAGVGTAA. At 90 to 144 the chain is on the periplasmic side; the sequence is RHLYVQLNPGFSCGFDALQPVVDSLPPAHWLPGVFKVAGLCETVYPPIFGILLPG. Cys102 and Cys130 are oxidised to a cystine. Residues 145–163 form a helical membrane-spanning segment; it reads WALIAFALIVVPVAASLLR. At 164-169 the chain is on the cytoplasmic side; the sequence is HRGRLR.

This sequence belongs to the DsbB family.

It is found in the cell inner membrane. In terms of biological role, required for disulfide bond formation in some periplasmic proteins. Acts by oxidizing the DsbA protein. The protein is Disulfide bond formation protein B of Burkholderia thailandensis (strain ATCC 700388 / DSM 13276 / CCUG 48851 / CIP 106301 / E264).